The sequence spans 456 residues: Probable glycine dehydrogenase (decarboxylating) subunit 1 (456 aa).

Belongs to the GcvP family. N-terminal subunit subfamily. In terms of assembly, the glycine cleavage system is composed of four proteins: P, T, L and H. In this organism, the P 'protein' is a heterodimer of two subunits.

The catalysed reaction is N(6)-[(R)-lipoyl]-L-lysyl-[glycine-cleavage complex H protein] + glycine + H(+) = N(6)-[(R)-S(8)-aminomethyldihydrolipoyl]-L-lysyl-[glycine-cleavage complex H protein] + CO2. In terms of biological role, the glycine cleavage system catalyzes the degradation of glycine. The P protein binds the alpha-amino group of glycine through its pyridoxal phosphate cofactor; CO(2) is released and the remaining methylamine moiety is then transferred to the lipoamide cofactor of the H protein. The polypeptide is Probable glycine dehydrogenase (decarboxylating) subunit 1 (Legionella pneumophila (strain Corby)).